Here is a 305-residue protein sequence, read N- to C-terminus: UDP-3-O-acyl-N-acetylglucosamine deacetylase (305 aa).

Zn(2+) is bound by residues H79, H238, and D242. Catalysis depends on H265, which acts as the Proton donor.

This sequence belongs to the LpxC family. It depends on Zn(2+) as a cofactor.

The catalysed reaction is a UDP-3-O-[(3R)-3-hydroxyacyl]-N-acetyl-alpha-D-glucosamine + H2O = a UDP-3-O-[(3R)-3-hydroxyacyl]-alpha-D-glucosamine + acetate. It participates in glycolipid biosynthesis; lipid IV(A) biosynthesis; lipid IV(A) from (3R)-3-hydroxytetradecanoyl-[acyl-carrier-protein] and UDP-N-acetyl-alpha-D-glucosamine: step 2/6. Catalyzes the hydrolysis of UDP-3-O-myristoyl-N-acetylglucosamine to form UDP-3-O-myristoylglucosamine and acetate, the committed step in lipid A biosynthesis. In Actinobacillus succinogenes (strain ATCC 55618 / DSM 22257 / CCUG 43843 / 130Z), this protein is UDP-3-O-acyl-N-acetylglucosamine deacetylase.